The chain runs to 281 residues: Type VI secretion system accessory component TagJ (281 aa).

Interacts with TssB1 (via N-terminus). Interacts with ClpV1.

In terms of biological role, component of the H1 type VI (H1-T6SS) secretion system that plays a role in the release of toxins targeting both eukaryotic and prokaryotic species. Forms a stable complex with TssB1. This complex, although not crucial for the H1-T6SS function, may fine-tune the assembly of the system. Plays a role in the interaction between ClpV1 and the TssC1/TssB1 sheath. This Pseudomonas aeruginosa (strain ATCC 15692 / DSM 22644 / CIP 104116 / JCM 14847 / LMG 12228 / 1C / PRS 101 / PAO1) protein is Type VI secretion system accessory component TagJ.